The primary structure comprises 115 residues: DNA-binding protein PH1060 (115 aa).

It belongs to the PDCD5 family.

This chain is DNA-binding protein PH1060, found in Pyrococcus horikoshii (strain ATCC 700860 / DSM 12428 / JCM 9974 / NBRC 100139 / OT-3).